The primary structure comprises 418 residues: Gamma-glutamyl phosphate reductase (418 aa).

This sequence belongs to the gamma-glutamyl phosphate reductase family.

It is found in the cytoplasm. It carries out the reaction L-glutamate 5-semialdehyde + phosphate + NADP(+) = L-glutamyl 5-phosphate + NADPH + H(+). It functions in the pathway amino-acid biosynthesis; L-proline biosynthesis; L-glutamate 5-semialdehyde from L-glutamate: step 2/2. Catalyzes the NADPH-dependent reduction of L-glutamate 5-phosphate into L-glutamate 5-semialdehyde and phosphate. The product spontaneously undergoes cyclization to form 1-pyrroline-5-carboxylate. In Syntrophotalea carbinolica (strain DSM 2380 / NBRC 103641 / GraBd1) (Pelobacter carbinolicus), this protein is Gamma-glutamyl phosphate reductase.